Here is a 377-residue protein sequence, read N- to C-terminus: EPS I polysaccharide export outer membrane protein EpsA (377 aa).

A signal peptide spans 1-23 (MFVSIPSIRKTVMSLCAVPLMAA). C24 is lipidated: N-palmitoyl cysteine. C24 carries S-diacylglycerol cysteine lipidation.

The protein belongs to the BexD/CtrA/VexA family.

Its subcellular location is the cell outer membrane. Its function is as follows. Probably involved in polymerization and/or export of exopolysaccharide EPS I which functions as a virulence factor. This Ralstonia solanacearum (Pseudomonas solanacearum) protein is EPS I polysaccharide export outer membrane protein EpsA (epsA).